Consider the following 878-residue polypeptide: Pyruvate, phosphate dikinase (878 aa).

Residues 1-347 (MKKLIYYFGS…LYILQTRTAK (347 aa)) are N-terminal. Arginine 96 is a binding site for ATP. Residues 348–404 (RTAIAAINIAVQMVEEKLISKEQALMRIDPESLNQLLHTRIDYSKGLTSIAEGLPAS) are linker 1. The segment at 405 to 502 (PGAATGIAVF…VIKQGDIITI (98 aa)) is central. Threonine 457 carries the phosphothreonine; by PDRP1 modification. Histidine 459 functions as the Tele-phosphohistidine intermediate in the catalytic mechanism. A linker 2 region spans residues 503–537 (DGGSGKIFLGEMPLIQPTFSEESKLILDWADEISS). A C-terminal region spans residues 538-878 (LKVRANAETV…AAAQAKIKHG (341 aa)). 7 residues coordinate substrate: arginine 565, arginine 621, glutamate 749, glycine 770, threonine 771, asparagine 772, and aspartate 773. Mg(2+) is bound at residue glutamate 749. Residue aspartate 773 coordinates Mg(2+). The Proton donor role is filled by cysteine 835.

It belongs to the PEP-utilizing enzyme family. As to quaternary structure, homodimer. It depends on Mg(2+) as a cofactor. Post-translationally, phosphorylation of Thr-457 in the dark inactivates the enzyme. Dephosphorylation upon light stimulation reactivates the enzyme.

The enzyme catalyses pyruvate + phosphate + ATP = phosphoenolpyruvate + AMP + diphosphate + H(+). Its activity is regulated as follows. Activated by light-induced dephosphorylation. Inhibited by dark-induced phosphorylation. Both reactions are catalyzed by PDRP1. Functionally, catalyzes the reversible phosphorylation of pyruvate and phosphate. The polypeptide is Pyruvate, phosphate dikinase (ppdK) (Rickettsia conorii (strain ATCC VR-613 / Malish 7)).